Consider the following 840-residue polypeptide: Phosphatidylglycerol lysyltransferase (840 aa).

Residues 1-8 lie on the Cytoplasmic side of the membrane; sequence MNQEVKNK. The helical transmembrane segment at 9 to 29 threads the bilayer; it reads IFSILKITFATALFIFVAITL. Residues 30–52 lie on the Extracellular side of the membrane; sequence YRELSGINFKDTLVEFSKINRMS. The helical transmembrane segment at 53–73 threads the bilayer; it reads LVLLFIGGGASLVILSMYDVI. The Cytoplasmic portion of the chain corresponds to 74 to 89; that stretch reads LSRALKMDISLGKVLR. The chain crosses the membrane as a helical span at residues 90–110; it reads VSYIINALNAIVGFGGFIGAG. The Extracellular segment spans residues 111–128; sequence VRAMVYKNYTHDKKKLVH. The helical transmembrane segment at 129-149 threads the bilayer; it reads FISLILISMLTGLSLLSLLIV. The Cytoplasmic segment spans residues 150–161; it reads FHVFDASLILDK. Residues 162–182 traverse the membrane as a helical segment; the sequence is ITWVRWVLYVVSFFLPLFIIY. The Extracellular portion of the chain corresponds to 183 to 200; sequence SMVRPPDKNNRFVGLYCT. The helical transmembrane segment at 201–221 threads the bilayer; that stretch reads LVSCVEWLAAAVVLYFCGVIV. The Cytoplasmic segment spans residues 222 to 229; that stretch reads DAHVSFMS. A helical transmembrane segment spans residues 230–250; sequence FIAIFIIAALSGLVSFIPGGF. Over 251–271 the chain is Extracellular; sequence GAFDLVVLLGFKTLGVPEEKV. A helical transmembrane segment spans residues 272–292; the sequence is LLMLLLYRFAYYFVPVIIALI. Topologically, residues 293-337 are cytoplasmic; it reads LSSFEFGTSAKKYIEGSKYFIPAKDVTSFLMSYQKDIIAKIPSLS. A helical membrane pass occupies residues 338-358; that stretch reads LAILVFFTSMIFFVNNLTIVY. Topologically, residues 359 to 369 are extracellular; it reads DALYDGNHLTY. The helical transmembrane segment at 370–390 threads the bilayer; it reads YILLAIHTSACLLLLLNVVGI. The Cytoplasmic segment spans residues 391–394; sequence YKQS. 2 helical membrane-spanning segments follow: residues 395–415 and 416–436; these read RRAI…TFFT and YASY…IVAF. The Cytoplasmic segment spans residues 437–450; the sequence is RRARRLKRPVRMRN. A helical transmembrane segment spans residues 451–471; it reads IVAMLLFSLFILYVNHIFIAG. At 472–489 the chain is on the extracellular side; the sequence is TLYALDIYTIEMHTSVLR. A helical membrane pass occupies residues 490–510; the sequence is YYFWLTILIIAIIIGMIAWLF. At 511–840 the chain is on the cytoplasmic side; the sequence is DYQFSKVRIS…SKVMRVIRHK (330 aa).

This sequence belongs to the LPG synthase family.

Its subcellular location is the cell membrane. The catalysed reaction is L-lysyl-tRNA(Lys) + a 1,2-diacyl-sn-glycero-3-phospho-(1'-sn-glycerol) = a 1,2-diacyl-sn-glycero-3-phospho-1'-(3'-O-L-lysyl)-sn-glycerol + tRNA(Lys). Functionally, catalyzes the transfer of a lysyl group from L-lysyl-tRNA(Lys) to membrane-bound phosphatidylglycerol (PG), which produces lysylphosphatidylglycerol (LPG), a major component of the bacterial membrane with a positive net charge. LPG synthesis contributes to bacterial virulence as it is involved in the resistance mechanism against cationic antimicrobial peptides (CAMP) produces by the host's immune system (defensins, cathelicidins) and by the competing microorganisms (bacteriocins). In fact, the modification of anionic phosphatidylglycerol with positively charged L-lysine results in repulsion of the peptides. The protein is Phosphatidylglycerol lysyltransferase (mprF) of Staphylococcus aureus (strain Mu50 / ATCC 700699).